Consider the following 783-residue polypeptide: MNTKILDQLEFNKVKDQFTEYLQTEQAQAELRDLVPMTNPERIQNQFTEIQEMSEIFVEHHGFAIGSLRDISEPLRRLELDADLNIQELIAIKKVLQASADLSRFYADLENVELIALKRLFEKIEAFPSLQGSLQSINDGGFIEHFASPELQNIRRQLKACDDAIRQTLQDILKKSGHMLAENLIASRNGRSVLPVKNTYRNRIAGVVHDISSSGNTVYIEPRAVIQLNEKITQLRADERHEMARILHELSDQLRPHTAAIANNAWILGHMDFIRGKYLYLHDKKAIIPEISDNQTLQLLNVRHPLLINPVANDLRFDEDLTVIVITGPNTGGKTVMLKTLGLAQLMAQSGLPILADKGSRVAIFQEIFADIGDEQSIEQSLSTFSSHMTHIVEILNTADSNSLVLVDELGAGTDPQEGASLAMAILEHLRLSQIKTMATTHYPELKAYGIETQHVENASMEFDTATLRPTYRFMQGVPGRSNAFEIARRLGLNEIIVKEAENLTDTDSDVNRIIEQLEAQTVETQKRLEHIKDVEQENLKFNRAVKKLYNEFSHEYDKELEKAQKEIQEMVDTALAESDSILKNLHDKSQLKPHEVIDAKGKLKKLAAQVDLSKNKVLRKAKKEKAARAPRVGDDIIVTAYGQRGTLTSQAKNGNWEAQVGLIKMSLKADEFTLVRTQAEAQQPKKKQINVVKKAKKTSSDGPRARLDLRGKRYEEAMQELDAFIDQALLNNMSQVEIIHGIGTGVIRDAVTKYLRRHRHVKNFEYAPQSAGGSGCTIATLG.

An ATP-binding site is contributed by 328-335 (GPNTGGKT). A Smr domain is found at 708–783 (LDLRGKRYEE…GSGCTIATLG (76 aa)).

Belongs to the DNA mismatch repair MutS family. MutS2 subfamily. As to quaternary structure, homodimer. Binds to stalled ribosomes, contacting rRNA.

In terms of biological role, endonuclease that is involved in the suppression of homologous recombination and thus may have a key role in the control of bacterial genetic diversity. Its function is as follows. Acts as a ribosome collision sensor, splitting the ribosome into its 2 subunits. Detects stalled/collided 70S ribosomes which it binds and splits by an ATP-hydrolysis driven conformational change. Acts upstream of the ribosome quality control system (RQC), a ribosome-associated complex that mediates the extraction of incompletely synthesized nascent chains from stalled ribosomes and their subsequent degradation. Probably generates substrates for RQC. The chain is Endonuclease MutS2 from Streptococcus thermophilus (strain ATCC BAA-250 / LMG 18311).